Reading from the N-terminus, the 412-residue chain is MQAKLIERLMTYAKIDTQSDFTSTTTPSTAKQWDLIRHLEKELKELGLTDVETDEYGYLFATLPSNVDYDVPTIGFLAHVDTATDFTGTNVSPQLVEHYEGGDIVLNESLNVVLSPKDFPELDGYVGHTLMTTDGTTLLGADDKAGIAEIVTAIEYLLAHPEIPHGPVRIAFTPDEEIGRGPHKFDVARFNADFAYTMDGGPLGELQYESFNAAGATVTFHGTNVHPGSAKNKMVNSMKLAMAFQNRLPADEAPERTSNYEGFFHLNGFNGDVEKTTLQYIIRDHDKQKFEARKALMEKLVLEWKQKYGEERIELQMEDQYYNMAEKIEPVKHIVDTVADVMRGLGIEPKIEPIRGGTDGSQLSYMGLPTPNIFTGGENYHGKFEYVSVNNMEKATTVIIETLRTFAKRAQA.

His79 provides a ligand contact to Zn(2+). Asp81 is an active-site residue. Asp142 lines the Zn(2+) pocket. Glu176 (proton acceptor) is an active-site residue. Residues Glu177, Asp199, and His381 each coordinate Zn(2+).

This sequence belongs to the peptidase M20B family. It depends on Zn(2+) as a cofactor.

It localises to the cytoplasm. The catalysed reaction is Release of the N-terminal residue from a tripeptide.. Its function is as follows. Cleaves the N-terminal amino acid of tripeptides. This is Peptidase T from Exiguobacterium sp. (strain ATCC BAA-1283 / AT1b).